The sequence spans 298 residues: ATP synthase gamma chain (298 aa).

The protein belongs to the ATPase gamma chain family. In terms of assembly, F-type ATPases have 2 components, CF(1) - the catalytic core - and CF(0) - the membrane proton channel. CF(1) has five subunits: alpha(3), beta(3), gamma(1), delta(1), epsilon(1). CF(0) has three main subunits: a, b and c.

It is found in the cell inner membrane. Produces ATP from ADP in the presence of a proton gradient across the membrane. The gamma chain is believed to be important in regulating ATPase activity and the flow of protons through the CF(0) complex. The sequence is that of ATP synthase gamma chain from Zymomonas mobilis subsp. mobilis (strain ATCC 31821 / ZM4 / CP4).